We begin with the raw amino-acid sequence, 155 residues long: Biotin carboxyl carrier protein of acetyl-CoA carboxylase (155 aa).

The Biotinyl-binding domain occupies 72 to 155; that stretch reads AASDELSGHL…EFDEPLIVIE (84 aa). The residue at position 121 (K121) is an N6-biotinyllysine.

Homodimer.

The protein operates within lipid metabolism; fatty acid biosynthesis. This protein is a component of the acetyl coenzyme A carboxylase complex; first, biotin carboxylase catalyzes the carboxylation of the carrier protein and then the transcarboxylase transfers the carboxyl group to form malonyl-CoA. The polypeptide is Biotin carboxyl carrier protein of acetyl-CoA carboxylase (accB) (Haemophilus influenzae (strain ATCC 51907 / DSM 11121 / KW20 / Rd)).